We begin with the raw amino-acid sequence, 212 residues long: Imidazole glycerol phosphate synthase subunit HisH (212 aa).

The Glutamine amidotransferase type-1 domain maps to 3-212 (DIAIVDYGMG…LGNFVRWKPV (210 aa)). Cys82 (nucleophile) is an active-site residue. Catalysis depends on residues His191 and Glu193.

Heterodimer of HisH and HisF.

The protein localises to the cytoplasm. It catalyses the reaction 5-[(5-phospho-1-deoxy-D-ribulos-1-ylimino)methylamino]-1-(5-phospho-beta-D-ribosyl)imidazole-4-carboxamide + L-glutamine = D-erythro-1-(imidazol-4-yl)glycerol 3-phosphate + 5-amino-1-(5-phospho-beta-D-ribosyl)imidazole-4-carboxamide + L-glutamate + H(+). The enzyme catalyses L-glutamine + H2O = L-glutamate + NH4(+). The protein operates within amino-acid biosynthesis; L-histidine biosynthesis; L-histidine from 5-phospho-alpha-D-ribose 1-diphosphate: step 5/9. Functionally, IGPS catalyzes the conversion of PRFAR and glutamine to IGP, AICAR and glutamate. The HisH subunit catalyzes the hydrolysis of glutamine to glutamate and ammonia as part of the synthesis of IGP and AICAR. The resulting ammonia molecule is channeled to the active site of HisF. The protein is Imidazole glycerol phosphate synthase subunit HisH of Nitrosospira multiformis (strain ATCC 25196 / NCIMB 11849 / C 71).